The primary structure comprises 161 residues: Ecotin (161 aa).

A signal peptide spans 1-23; the sequence is MGNFTVRATAGLMLASLSTLAHA. Cys-69 and Cys-106 are disulfide-bonded.

The protein belongs to the protease inhibitor I11 (ecotin) family. In terms of assembly, homodimer.

The protein localises to the periplasm. Functionally, general inhibitor of family S1 serine proteases. In Pseudomonas fluorescens (strain Pf0-1), this protein is Ecotin.